The chain runs to 20 residues: U27-ctenitoxin-Pn1a (20 aa).

A disordered region spans residues 1–20 (LAKRADICQPGKTSQRACET). Positions 11 to 20 (GKTSQRACET) are enriched in polar residues.

Contains 4 disulfide bonds. In terms of tissue distribution, expressed by the venom gland.

The protein localises to the secreted. In terms of biological role, has a vascular smooth muscle contracting activity. Causes short-lived contractions of both arterial and venous rabbit vessels. The protein is U27-ctenitoxin-Pn1a of Phoneutria nigriventer (Brazilian armed spider).